The primary structure comprises 414 residues: Imidazolonepropionase (414 aa).

Residues H73 and H75 each coordinate Fe(3+). Zn(2+) is bound by residues H73 and H75. 3 residues coordinate 4-imidazolone-5-propanoate: R82, Y145, and H178. Y145 provides a ligand contact to N-formimidoyl-L-glutamate. H249 is a Fe(3+) binding site. H249 provides a ligand contact to Zn(2+). A 4-imidazolone-5-propanoate-binding site is contributed by Q252. D324 contacts Fe(3+). Zn(2+) is bound at residue D324. 2 residues coordinate N-formimidoyl-L-glutamate: N326 and G328. S329 is a binding site for 4-imidazolone-5-propanoate.

This sequence belongs to the metallo-dependent hydrolases superfamily. HutI family. It depends on Zn(2+) as a cofactor. Fe(3+) is required as a cofactor.

The protein resides in the cytoplasm. It catalyses the reaction 4-imidazolone-5-propanoate + H2O = N-formimidoyl-L-glutamate. Its pathway is amino-acid degradation; L-histidine degradation into L-glutamate; N-formimidoyl-L-glutamate from L-histidine: step 3/3. Catalyzes the hydrolytic cleavage of the carbon-nitrogen bond in imidazolone-5-propanoate to yield N-formimidoyl-L-glutamate. It is the third step in the universal histidine degradation pathway. In Shewanella pealeana (strain ATCC 700345 / ANG-SQ1), this protein is Imidazolonepropionase.